Consider the following 36-residue polypeptide: Defensin-like turtle egg white protein TEWP (36 aa).

Q1 is modified (pyrrolidone carboxylic acid). 3 disulfides stabilise this stretch: C4–C30, C8–C29, and C12–C24.

This sequence belongs to the beta-defensin family. Monomer. In terms of tissue distribution, detected in egg white (at protein level).

It is found in the secreted. Its function is as follows. Antibacterial and antiviral peptide. Has strong inhibitory activity towards E.coli and S.typhimurium. Has significant antiviral activity against Chandipura virus. This Caretta caretta (Loggerhead sea turtle) protein is Defensin-like turtle egg white protein TEWP.